The chain runs to 472 residues: Exodeoxyribonuclease 7 large subunit (472 aa).

It belongs to the XseA family. Heterooligomer composed of large and small subunits.

The protein resides in the cytoplasm. The catalysed reaction is Exonucleolytic cleavage in either 5'- to 3'- or 3'- to 5'-direction to yield nucleoside 5'-phosphates.. Functionally, bidirectionally degrades single-stranded DNA into large acid-insoluble oligonucleotides, which are then degraded further into small acid-soluble oligonucleotides. This chain is Exodeoxyribonuclease 7 large subunit, found in Carboxydothermus hydrogenoformans (strain ATCC BAA-161 / DSM 6008 / Z-2901).